A 454-amino-acid polypeptide reads, in one-letter code: Chromosomal replication initiator protein DnaA (454 aa).

The tract at residues 1–74 (MFDLDKFWQF…IQEAYAYADM (74 aa)) is domain I, interacts with DnaA modulators. The tract at residues 74-116 (MEIQPKFEVAGKEGPERLVTPQPRIKTNQEILENRRDEFAQDL) is domain II. A domain III, AAA+ region region spans residues 117-333 (QLNSKYTFDT…GALVKVQAHA (217 aa)). Glycine 161, glycine 163, lysine 164, and threonine 165 together coordinate ATP. Residues 334–454 (TIEREDINVD…VYDLKAMLEH (121 aa)) are domain IV, binds dsDNA.

This sequence belongs to the DnaA family. In terms of assembly, oligomerizes as a right-handed, spiral filament on DNA at oriC.

The protein localises to the cytoplasm. Plays an essential role in the initiation and regulation of chromosomal replication. ATP-DnaA binds to the origin of replication (oriC) to initiate formation of the DNA replication initiation complex once per cell cycle. Binds the DnaA box (a 9 base pair repeat at the origin) and separates the double-stranded (ds)DNA. Forms a right-handed helical filament on oriC DNA; dsDNA binds to the exterior of the filament while single-stranded (ss)DNA is stabiized in the filament's interior. The ATP-DnaA-oriC complex binds and stabilizes one strand of the AT-rich DNA unwinding element (DUE), permitting loading of DNA polymerase. After initiation quickly degrades to an ADP-DnaA complex that is not apt for DNA replication. Binds acidic phospholipids. The polypeptide is Chromosomal replication initiator protein DnaA (Lactobacillus johnsonii (strain CNCM I-12250 / La1 / NCC 533)).